Consider the following 891-residue polypeptide: Alanine--tRNA ligase (891 aa).

4 residues coordinate Zn(2+): histidine 564, histidine 568, cysteine 678, and histidine 682.

Belongs to the class-II aminoacyl-tRNA synthetase family. Zn(2+) serves as cofactor.

The protein resides in the cytoplasm. It catalyses the reaction tRNA(Ala) + L-alanine + ATP = L-alanyl-tRNA(Ala) + AMP + diphosphate. In terms of biological role, catalyzes the attachment of alanine to tRNA(Ala) in a two-step reaction: alanine is first activated by ATP to form Ala-AMP and then transferred to the acceptor end of tRNA(Ala). Also edits incorrectly charged Ser-tRNA(Ala) and Gly-tRNA(Ala) via its editing domain. The protein is Alanine--tRNA ligase of Nitrobacter winogradskyi (strain ATCC 25391 / DSM 10237 / CIP 104748 / NCIMB 11846 / Nb-255).